A 24-amino-acid chain; its full sequence is Gaegurin-6 (24 aa).

A disulfide bridge links cysteine 18 with cysteine 24.

The protein belongs to the frog skin active peptide (FSAP) family. Brevinin subfamily. In terms of assembly, monomer. Expressed by the skin glands.

It is found in the secreted. Functionally, has a non-hemolytic activity. Has a broad spectrum of activity against both Gram-positive and Gram-negative bacteria, fungi and protozoa. The polypeptide is Gaegurin-6 (GGN6) (Glandirana rugosa (Japanese wrinkled frog)).